We begin with the raw amino-acid sequence, 378 residues long: Dihydroorotate dehydrogenase (quinone) (378 aa).

FMN-binding positions include 79 to 83 (PGYDK) and T103. K83 is a binding site for substrate. 128-132 (NRMGF) contributes to the substrate binding site. Residues N160 and N193 each coordinate FMN. A substrate-binding site is contributed by N193. Residue S196 is the Nucleophile of the active site. A substrate-binding site is contributed by N198. FMN contacts are provided by K231 and T259. Residue 260 to 261 (NT) coordinates substrate. Residues G289, G318, and 339–340 (YT) contribute to the FMN site.

It belongs to the dihydroorotate dehydrogenase family. Type 2 subfamily. As to quaternary structure, monomer. FMN serves as cofactor.

The protein localises to the cell membrane. It carries out the reaction (S)-dihydroorotate + a quinone = orotate + a quinol. It functions in the pathway pyrimidine metabolism; UMP biosynthesis via de novo pathway; orotate from (S)-dihydroorotate (quinone route): step 1/1. In terms of biological role, catalyzes the conversion of dihydroorotate to orotate with quinone as electron acceptor. This Trichodesmium erythraeum (strain IMS101) protein is Dihydroorotate dehydrogenase (quinone).